Reading from the N-terminus, the 230-residue chain is MTTLTARPEAITFDPQQSALIVVDMQNAYATPGGYLDLAGFDVSTTRPVIANIQTAVTAARAAGMLIIWFQNGWDEQYVEAGGPGSPNFHKSNALKTMRNQPQLQGKLLAKGSWDYQLVDELMPQPGDIVLPKPRYSGFFNTPLDSILRSRGIRHLVFTGIATNVCVESTLRDGFFLEYFGVVLEDATHQAGPEFAQKAALFNIETFFGWVSDVETFCDALSSTSFARIA.

Catalysis depends on Asp-24, which acts as the Proton acceptor. Residue Lys-133 is part of the active site. Cys-166 acts as the Nucleophile in catalysis.

Belongs to the isochorismatase family. RutB subfamily.

The catalysed reaction is (Z)-3-ureidoacrylate + H2O + H(+) = (Z)-3-aminoacrylate + NH4(+) + CO2. The enzyme catalyses (Z)-3-ureidoacrylate + H2O = (Z)-3-aminoacrylate + carbamate + H(+). It carries out the reaction (Z)-2-methylureidoacrylate + H2O + H(+) = (Z)-2-methylaminoacrylate + NH4(+) + CO2. In terms of biological role, hydrolyzes ureidoacrylate to form aminoacrylate and carbamate. The carbamate hydrolyzes spontaneously, thereby releasing one of the nitrogen atoms of the pyrimidine ring as ammonia and one of its carbon atoms as CO2. The polypeptide is Ureidoacrylate amidohydrolase RutB (Escherichia coli O6:K15:H31 (strain 536 / UPEC)).